The sequence spans 370 residues: Endopolygalacturonase A (370 aa).

Residues 1 to 19 (MPSAKPLFCLATLAGAALA) form the signal peptide. Positions 20–32 (APAPSRATDFNKR) are excised as a propeptide. A disulfide bridge connects residues C35 and C50. 6 PbH1 repeats span residues 162–192 (SDNL…DISE), 193–214 (STYI…AINS), 215–235 (GENI…SIGS), 244–265 (VKNV…RIKT), 273–295 (VEDI…VIEQ), and 307–352 (SNGV…DITG). C209 and C225 form a disulfide bridge. H229 is an active-site residue. Residue N246 is glycosylated (N-linked (GlcNAc...) asparagine). 2 disulfides stabilise this stretch: C335–C340 and C359–C368.

Belongs to the glycosyl hydrolase 28 family.

It is found in the secreted. It carries out the reaction (1,4-alpha-D-galacturonosyl)n+m + H2O = (1,4-alpha-D-galacturonosyl)n + (1,4-alpha-D-galacturonosyl)m.. In terms of biological role, involved in maceration and soft-rotting of plant tissue. Hydrolyzes the 1,4-alpha glycosidic bonds of de-esterified pectate in the smooth region of the plant cell wall. This Aspergillus awamori (Black koji mold) protein is Endopolygalacturonase A (pgaA).